The chain runs to 185 residues: Elongation factor P (185 aa).

Belongs to the elongation factor P family.

It is found in the cytoplasm. It functions in the pathway protein biosynthesis; polypeptide chain elongation. Involved in peptide bond synthesis. Stimulates efficient translation and peptide-bond synthesis on native or reconstituted 70S ribosomes in vitro. Probably functions indirectly by altering the affinity of the ribosome for aminoacyl-tRNA, thus increasing their reactivity as acceptors for peptidyl transferase. In Endomicrobium trichonymphae, this protein is Elongation factor P.